Here is a 405-residue protein sequence, read N- to C-terminus: Mucosal addressin cell adhesion molecule 1 (405 aa).

The signal sequence occupies residues 1 to 21 (MESILALLLALALVPYQLSRG). Ig-like domains follow at residues 22 to 109 (QSFQ…ILVY) and 110 to 227 (AFPD…TSPK). The Extracellular portion of the chain corresponds to 22–364 (QSFQVNPPES…PGQVTPNSSS (343 aa)). Disulfide bonds link Cys-45-Cys-91, Cys-49-Cys-95, and Cys-132-Cys-200. A mucin-like region spans residues 221–257 (QSQTSPKPPNTTSAEPYILTSSSTAEAVSTGLNITTL). 2 N-linked (GlcNAc...) asparagine glycosylation sites follow: Asn-230 and Asn-253. The interval 255 to 275 (TTLPSAPPYPKLSPRTLSSEG) is disordered. In terms of domain architecture, Ig-like 3 spans 258–357 (PSAPPYPKLS…EVTNLYVPGQ (100 aa)). A disulfide bond links Cys-293 and Cys-341. Residue Asn-361 is glycosylated (N-linked (GlcNAc...) asparagine). Residues 365–385 (TVVLWIGSLVLGLLALVFLAY) traverse the membrane as a helical segment. Residues 386–405 (RLWKCYRPGPRPDTSSCTHL) lie on the Cytoplasmic side of the membrane.

As to quaternary structure, homodimer. Post-translationally, O-glycosylated; contains syalic acid. The Ser/Thr-rich mucin-like domain may provide possible sites for O-glycosylation. In terms of tissue distribution, highly expressed on high endothelial venules (HEV) of organized intestinal lymphoid tissues like the Peyer patches and mesenteric lymph nodes, and in the lamina propria of the intestine. Some expression found in the spleen, and low levels of expression in the peripheral lymph nodes and the lactating mammary gland. No expression was detected in the liver, kidneys, lungs or in normal brain. Expressed as well in brain endothelioma cells, and mucosal tissues which are in a chronic state of inflammation, such as inflamed pancreas.

The protein resides in the membrane. In terms of biological role, cell adhesion leukocyte receptor expressed by mucosal venules, helps to direct lymphocyte traffic into mucosal tissues including the Peyer patches and the intestinal lamina propria. It can bind both the integrin alpha-4/beta-7 and L-selectin, regulating both the passage and retention of leukocytes. Both isoform 1 and isoform 2 can adhere to integrin alpha-4/beta-7. Isoform 2, lacking the mucin-like domain, may be specialized in supporting integrin alpha-4/beta-7-dependent adhesion strengthening, independent of L-selectin binding. The protein is Mucosal addressin cell adhesion molecule 1 (Madcam1) of Mus musculus (Mouse).